The sequence spans 370 residues: tRNA N(3)-cytidine methyltransferase METTL2 (370 aa).

Residues tryptophan 72, tyrosine 76, glycine 181, aspartate 206, aspartate 232, leucine 233, and isoleucine 253 each coordinate S-adenosyl-L-methionine.

It belongs to the methyltransferase superfamily. METL family. As to quaternary structure, monomer.

The protein localises to the cytoplasm. The catalysed reaction is cytidine(32) in tRNA(Thr) + S-adenosyl-L-methionine = N(3)-methylcytidine(32) in tRNA(Thr) + S-adenosyl-L-homocysteine + H(+). The enzyme catalyses cytidine(32) in tRNA(Arg)(CCU) + S-adenosyl-L-methionine = N(3)-methylcytidine(32) in tRNA(Arg)(CCU) + S-adenosyl-L-homocysteine + H(+). S-adenosyl-L-methionine-dependent methyltransferase that mediates N(3)-methylcytidine modification of residue 32 of the tRNA anticodon loop of tRNA(Thr)(UGU) and tRNA(Arg)(CCU). N(3)-methylcytidine methylation by METTL2 requires the N6-threonylcarbamoylation of tRNA (t6A37) by the EKC/KEOPS complex as prerequisite. This Gallus gallus (Chicken) protein is tRNA N(3)-cytidine methyltransferase METTL2 (METTL2).